The following is a 308-amino-acid chain: MLSNQPHKSVLLDEVIHNLNIKGDGNYLDLTVGFGGHSQHILEQLTTGTLTGNDMDKDSITFCTELFKDKKNVVLVHDNFANFFNHLKQLKVTKFDGILIDLGVSSYQLDKPERGFSFKHAGPFDMRMHQSDRVPTALDILERLSEEELTHVLKKFGEIAHPKPIAKALKTLINNTKNPTTVEVAETVKAAASNFEKYKSRNYLAKVFQAIRIYLNRELESLEIVLQHIPKLLNNKGRFLVIVFHSLEEKLVRNYIFKLTHFVQPPELPVKLTPPFELITKKPILPTEQEIKTNPRVRSAKLFVIEKK.

S-adenosyl-L-methionine contacts are provided by residues 35–37 (GGH), aspartate 54, phenylalanine 80, aspartate 101, and glutamine 108.

Belongs to the methyltransferase superfamily. RsmH family.

It is found in the cytoplasm. It catalyses the reaction cytidine(1402) in 16S rRNA + S-adenosyl-L-methionine = N(4)-methylcytidine(1402) in 16S rRNA + S-adenosyl-L-homocysteine + H(+). In terms of biological role, specifically methylates the N4 position of cytidine in position 1402 (C1402) of 16S rRNA. The polypeptide is Ribosomal RNA small subunit methyltransferase H (Mycoplasma pneumoniae (strain ATCC 29342 / M129 / Subtype 1) (Mycoplasmoides pneumoniae)).